The sequence spans 337 residues: Aspartate-semialdehyde dehydrogenase 2 (337 aa).

Residues 13–16 (TGAV) and 41–42 (RS) contribute to the NADP(+) site. Arg101 is a binding site for phosphate. The Acyl-thioester intermediate role is filled by Cys132. Gln159 contacts substrate. An NADP(+)-binding site is contributed by 162-163 (SG). Lys216 is a phosphate binding site. Arg238 lines the substrate pocket. Residue His245 is the Proton acceptor of the active site. Asn316 is an NADP(+) binding site.

This sequence belongs to the aspartate-semialdehyde dehydrogenase family. As to quaternary structure, homodimer.

It carries out the reaction L-aspartate 4-semialdehyde + phosphate + NADP(+) = 4-phospho-L-aspartate + NADPH + H(+). The protein operates within amino-acid biosynthesis; L-lysine biosynthesis via DAP pathway; (S)-tetrahydrodipicolinate from L-aspartate: step 2/4. Its pathway is amino-acid biosynthesis; L-methionine biosynthesis via de novo pathway; L-homoserine from L-aspartate: step 2/3. It participates in amino-acid biosynthesis; L-threonine biosynthesis; L-threonine from L-aspartate: step 2/5. Catalyzes the NADPH-dependent formation of L-aspartate-semialdehyde (L-ASA) by the reductive dephosphorylation of L-aspartyl-4-phosphate. In Vibrio cholerae serotype O1 (strain ATCC 39315 / El Tor Inaba N16961), this protein is Aspartate-semialdehyde dehydrogenase 2 (asd2).